A 92-amino-acid polypeptide reads, in one-letter code: Small ribosomal subunit protein uS19 (92 aa).

The protein belongs to the universal ribosomal protein uS19 family.

Functionally, protein S19 forms a complex with S13 that binds strongly to the 16S ribosomal RNA. This Bartonella quintana (strain Toulouse) (Rochalimaea quintana) protein is Small ribosomal subunit protein uS19.